A 655-amino-acid chain; its full sequence is HDA1 complex subunit 3 (655 aa).

The stretch at 482–632 (HELEVENNLK…KTMDNLENLT (151 aa)) forms a coiled coil. Positions 635-655 (RVRTQNGNTKKKSRAKKPGNV) are disordered. Basic residues predominate over residues 643–655 (TKKKSRAKKPGNV).

The protein belongs to the HDA2/3 family. HDA3 subfamily. As to quaternary structure, heterodimer with HDA2. Component of the HDA1 histone deacetylase complex composed of at least one HDA1 homodimer and one HDA2/HDA3 heterodimer. Interacts with HDA1 and HDA3.

It localises to the nucleus. Functionally, required for activity of HDA1 histone deacetylase complex. The HDA1 histone deacetylase complex is responsible for the deacetylation of lysine residues on the N-terminal part of the core histones (H2A, H2B, H3 and H4). Histone deacetylation gives a tag for epigenetic repression and plays an important role in transcriptional regulation, cell cycle progression and developmental events. This is HDA1 complex subunit 3 (HDA3) from Saccharomyces cerevisiae (strain ATCC 204508 / S288c) (Baker's yeast).